The following is a 149-amino-acid chain: NADH-quinone oxidoreductase subunit A (149 aa).

Helical transmembrane passes span 16-36 (FGIF…GAWF), 68-88 (FYLV…LFAW), and 98-118 (LGFI…VYLV).

Belongs to the complex I subunit 3 family. In terms of assembly, NDH-1 is composed of 13 different subunits. Subunits NuoA, H, J, K, L, M, N constitute the membrane sector of the complex.

The protein resides in the cell inner membrane. The enzyme catalyses a quinone + NADH + 5 H(+)(in) = a quinol + NAD(+) + 4 H(+)(out). Functionally, NDH-1 shuttles electrons from NADH, via FMN and iron-sulfur (Fe-S) centers, to quinones in the respiratory chain. The immediate electron acceptor for the enzyme in this species is believed to be ubiquinone. Couples the redox reaction to proton translocation (for every two electrons transferred, four hydrogen ions are translocated across the cytoplasmic membrane), and thus conserves the redox energy in a proton gradient. The chain is NADH-quinone oxidoreductase subunit A from Cronobacter sakazakii (strain ATCC BAA-894) (Enterobacter sakazakii).